Here is a 432-residue protein sequence, read N- to C-terminus: Glutamyl-tRNA reductase (432 aa).

Substrate contacts are provided by residues 55 to 58 (TCNR), serine 114, 119 to 121 (ETQ), and glutamine 125. Cysteine 56 acts as the Nucleophile in catalysis. 194 to 199 (GAGEMI) contributes to the NADP(+) binding site.

Belongs to the glutamyl-tRNA reductase family. In terms of assembly, homodimer.

It catalyses the reaction (S)-4-amino-5-oxopentanoate + tRNA(Glu) + NADP(+) = L-glutamyl-tRNA(Glu) + NADPH + H(+). Its pathway is porphyrin-containing compound metabolism; protoporphyrin-IX biosynthesis; 5-aminolevulinate from L-glutamyl-tRNA(Glu): step 1/2. Functionally, catalyzes the NADPH-dependent reduction of glutamyl-tRNA(Glu) to glutamate 1-semialdehyde (GSA). This chain is Glutamyl-tRNA reductase, found in Burkholderia orbicola (strain AU 1054).